The chain runs to 793 residues: Probable phosphoketolase (793 aa).

This sequence belongs to the XFP family. Thiamine diphosphate serves as cofactor.

The sequence is that of Probable phosphoketolase from Streptomyces avermitilis (strain ATCC 31267 / DSM 46492 / JCM 5070 / NBRC 14893 / NCIMB 12804 / NRRL 8165 / MA-4680).